The sequence spans 184 residues: Probable DNA-directed RNA polymerase subunit delta (184 aa).

Residues Leu14 to Trp81 form the HTH HARE-type domain. Disordered stretches follow at residues Asp88–Lys107 and Gly118–Asp184. Positions Gly118–Leu164 are enriched in acidic residues.

This sequence belongs to the RpoE family. In terms of assembly, RNAP is composed of a core of 2 alpha, a beta and a beta' subunits. The core is associated with a delta subunit and one of several sigma factors.

Participates in both the initiation and recycling phases of transcription. In the presence of the delta subunit, RNAP displays an increased specificity of transcription, a decreased affinity for nucleic acids, and an increased efficiency of RNA synthesis because of enhanced recycling. The polypeptide is Probable DNA-directed RNA polymerase subunit delta (Lactobacillus acidophilus (strain ATCC 700396 / NCK56 / N2 / NCFM)).